A 181-amino-acid polypeptide reads, in one-letter code: Large ribosomal subunit protein uL6 (181 aa).

The protein belongs to the universal ribosomal protein uL6 family. Part of the 50S ribosomal subunit.

This protein binds to the 23S rRNA, and is important in its secondary structure. It is located near the subunit interface in the base of the L7/L12 stalk, and near the tRNA binding site of the peptidyltransferase center. The chain is Large ribosomal subunit protein uL6 from Lawsonia intracellularis (strain PHE/MN1-00).